A 427-amino-acid polypeptide reads, in one-letter code: Protein TolB homolog (427 aa).

The N-terminal stretch at 1-20 is a signal peptide; it reads MLRRIFVSTFLVFGIVSLYA.

This sequence belongs to the TolB family.

Its subcellular location is the periplasm. This Chlamydia caviae (strain ATCC VR-813 / DSM 19441 / 03DC25 / GPIC) (Chlamydophila caviae) protein is Protein TolB homolog.